A 938-amino-acid polypeptide reads, in one-letter code: Isoleucine--tRNA ligase (938 aa).

Residues 58–68 (PYANGSIHIGH) carry the 'HIGH' region motif. At K183 the chain carries N6-acetyllysine. E561 serves as a coordination point for L-isoleucyl-5'-AMP. The short motif at 602-606 (KMSKS) is the 'KMSKS' region element. K605 is a binding site for ATP. Positions 901, 904, 921, and 924 each coordinate Zn(2+).

This sequence belongs to the class-I aminoacyl-tRNA synthetase family. IleS type 1 subfamily. Monomer. Requires Zn(2+) as cofactor.

The protein resides in the cytoplasm. The catalysed reaction is tRNA(Ile) + L-isoleucine + ATP = L-isoleucyl-tRNA(Ile) + AMP + diphosphate. Functionally, catalyzes the attachment of isoleucine to tRNA(Ile). As IleRS can inadvertently accommodate and process structurally similar amino acids such as valine, to avoid such errors it has two additional distinct tRNA(Ile)-dependent editing activities. One activity is designated as 'pretransfer' editing and involves the hydrolysis of activated Val-AMP. The other activity is designated 'posttransfer' editing and involves deacylation of mischarged Val-tRNA(Ile). This Escherichia coli O6:K15:H31 (strain 536 / UPEC) protein is Isoleucine--tRNA ligase.